A 565-amino-acid chain; its full sequence is Sensor histidine kinase YpdA (565 aa).

At 1–3 (MHE) the chain is on the cytoplasmic side. A helical membrane pass occupies residues 4-24 (IFNMLLAVFDRAALMLICLFF). Residues 25-45 (LIRIRLFRELLHKSAHSPKEL) are Periplasmic-facing. The helical transmembrane segment at 46-66 (LAVTAIFSLFALFSTWSGVPV) threads the bilayer. The Cytoplasmic segment spans residues 67–74 (EGSLVNVR). Residues 75–95 (IIAVMSGGILFGPWVGIITGV) form a helical membrane-spanning segment. Over 96 to 107 (IAGIHRYLIDIG) the chain is Periplasmic. Residues 108 to 128 (GVTAIPCFITSILAGCISGWI) form a helical membrane-spanning segment. Over 129 to 139 (NLKIPKAQRWR) the chain is Cytoplasmic. Residues 140-160 (VGILGGMLCETLTMILVIVWA) traverse the membrane as a helical segment. Residues 161–172 (PTTALGIDIVSK) lie on the Periplasmic side of the membrane. The chain crosses the membrane as a helical span at residues 173 to 193 (IGIPMILGSVCIGFIVLLVQS). Over 194–565 (VEGEKEASAA…PVASQATLLL (372 aa)) the chain is Cytoplasmic. Residues 223–342 (VNSESLRKVC…AVGLSQIIST (120 aa)) enclose the GAF domain. The Histidine kinase domain maps to 343–554 (QLEVSRAEQL…EIAFYIPNQR (212 aa)). At His371 the chain carries Phosphohistidine; by autocatalysis.

In terms of assembly, interacts with BtsT and YhjX. In terms of processing, autophosphorylated.

Its subcellular location is the cell inner membrane. It catalyses the reaction ATP + protein L-histidine = ADP + protein N-phospho-L-histidine.. Functionally, member of the two-component regulatory system YpdA/YpdB, which is part of a nutrient-sensing regulatory network composed of YpdA/YpdB, the high-affinity pyruvate signaling system BtsS/BtsR and their respective target proteins, YhjX and BtsT. YpdA activates YpdB by phosphorylation in response to high concentrations of extracellular pyruvate. Activation of the YpdA/YpdB signaling cascade also promotes BtsS/BtsR-mediated btsT expression. The protein is Sensor histidine kinase YpdA (ypdA) of Escherichia coli (strain K12).